Reading from the N-terminus, the 316-residue chain is Thymidylate synthase (316 aa).

Residues Arg23 and 178 to 179 (RR) contribute to the dUMP site. Cys198 serves as the catalytic Nucleophile. DUMP-binding positions include 218–221 (RSAD), Asn229, and 259–261 (HLY). A (6R)-5,10-methylene-5,6,7,8-tetrahydrofolate-binding site is contributed by Asp221. (6R)-5,10-methylene-5,6,7,8-tetrahydrofolate is bound at residue Ala315.

The protein belongs to the thymidylate synthase family. Bacterial-type ThyA subfamily. As to quaternary structure, homodimer.

The protein localises to the cytoplasm. It carries out the reaction dUMP + (6R)-5,10-methylene-5,6,7,8-tetrahydrofolate = 7,8-dihydrofolate + dTMP. The protein operates within pyrimidine metabolism; dTTP biosynthesis. Catalyzes the reductive methylation of 2'-deoxyuridine-5'-monophosphate (dUMP) to 2'-deoxythymidine-5'-monophosphate (dTMP) while utilizing 5,10-methylenetetrahydrofolate (mTHF) as the methyl donor and reductant in the reaction, yielding dihydrofolate (DHF) as a by-product. This enzymatic reaction provides an intracellular de novo source of dTMP, an essential precursor for DNA biosynthesis. The chain is Thymidylate synthase from Lacticaseibacillus paracasei (strain ATCC 334 / BCRC 17002 / CCUG 31169 / CIP 107868 / KCTC 3260 / NRRL B-441) (Lactobacillus paracasei).